The following is a 137-amino-acid chain: NADH-quinone oxidoreductase subunit A (137 aa).

The next 3 membrane-spanning stretches (helical) occupy residues 12-32, 68-88, and 94-114; these read WAFAVFLLGVCGLIAFMLGVS, LVAMLFVIFDVEALFLFAWAV, and GWVGLVGATVFITILFAGLVY.

This sequence belongs to the complex I subunit 3 family. As to quaternary structure, NDH-1 is composed of 13 different subunits. Subunits NuoA, H, J, K, L, M, N constitute the membrane sector of the complex.

Its subcellular location is the cell inner membrane. The enzyme catalyses a quinone + NADH + 5 H(+)(in) = a quinol + NAD(+) + 4 H(+)(out). Its function is as follows. NDH-1 shuttles electrons from NADH, via FMN and iron-sulfur (Fe-S) centers, to quinones in the respiratory chain. The immediate electron acceptor for the enzyme in this species is believed to be ubiquinone. Couples the redox reaction to proton translocation (for every two electrons transferred, four hydrogen ions are translocated across the cytoplasmic membrane), and thus conserves the redox energy in a proton gradient. This chain is NADH-quinone oxidoreductase subunit A, found in Ectopseudomonas mendocina (strain ymp) (Pseudomonas mendocina).